Here is a 320-residue protein sequence, read N- to C-terminus: Probable carboxylesterase M8 (320 aa).

The Involved in the stabilization of the negatively charged intermediate by the formation of the oxyanion hole motif lies at 52–54 (HGG). Catalysis depends on residues S137 and H296.

It belongs to the 'GDXG' lipolytic enzyme family.

It carries out the reaction a carboxylic ester + H2O = an alcohol + a carboxylate + H(+). It participates in secondary metabolite biosynthesis. Functionally, probable carboxylesterase; part of the gene cluster that mediates the biosynthesis of squalestatin S1 (SQS1, also known as zaragozic acid A), a heavily oxidized fungal polyketide that offers potent cholesterol lowering activity by targeting squalene synthase (SS). SQS1 is composed of a 2,8-dioxobicyclic[3.2.1]octane-3,4,5-tricarboxyclic acid core that is connected to two lipophilic polyketide arms. These initial steps feature the priming of an unusual benzoic acid starter unit onto the highly reducing polyketide synthase pks2, followed by oxaloacetate extension and product release to generate a tricarboxylic acid containing product. The phenylalanine ammonia lyase (PAL) M7 and the acyl-CoA ligase M9 are involved in transforming phenylalanine into benzoyl-CoA. The citrate synthase-like protein R3 is involved in connecting the C-alpha-carbons of the hexaketide chain and oxaloacetate to afford the tricarboxylic acid unit. The potential hydrolytic enzymes, M8 and M10, are in close proximity to pks2 and may participate in product release. On the other side, the tetraketide arm is synthesized by a the squalestatin tetraketide synthase pks1 and enzymatically esterified to the core in the last biosynthetic step, by the acetyltransferase M4. The biosynthesis of the tetraketide must involve 3 rounds of chain extension. After the first and second rounds methyl-transfer occurs, and in all rounds of extension the ketoreductase and dehydratase are active. The enoyl reductase and C-MeT of pks1 are not active in the final round of extension. The acetyltransferase M4 appears to have a broad substrate selectivity for its acyl CoA substrate, allowing the in vitro synthesis of novel squalestatins. The biosynthesis of SQS1 requires several oxidative steps likely performed by oxidoreductases M1, R1 and R2. Finally, in support of the identification of the cluster as being responsible for SQS1 production, the cluster contains a gene encoding a putative squalene synthase (SS) R6, suggesting a likely mechanism for self-resistance. This chain is Probable carboxylesterase M8, found in Phoma sp. (strain ATCC 20986 / MF5453).